The sequence spans 163 residues: Phosphopantetheine adenylyltransferase (163 aa).

Ser-9 is a binding site for substrate. ATP-binding positions include 9–10 (SF) and His-17. Residues Lys-41, Thr-73, and Arg-87 each contribute to the substrate site. ATP-binding positions include 88-90 (GLR), Glu-98, and 123-129 (YSYLSSS).

Belongs to the bacterial CoaD family. As to quaternary structure, homohexamer. The cofactor is Mg(2+).

It localises to the cytoplasm. The catalysed reaction is (R)-4'-phosphopantetheine + ATP + H(+) = 3'-dephospho-CoA + diphosphate. It participates in cofactor biosynthesis; coenzyme A biosynthesis; CoA from (R)-pantothenate: step 4/5. Reversibly transfers an adenylyl group from ATP to 4'-phosphopantetheine, yielding dephospho-CoA (dPCoA) and pyrophosphate. The protein is Phosphopantetheine adenylyltransferase of Lachnoclostridium phytofermentans (strain ATCC 700394 / DSM 18823 / ISDg) (Clostridium phytofermentans).